Reading from the N-terminus, the 309-residue chain is uncharacterized protein (309 aa).

The helical transmembrane segment at 23 to 43 (ALVLSSIVNILLLLLIYSTVF) threads the bilayer.

It belongs to the chlamydial CPn_0593/CT_474/TC_0759 family.

The protein resides in the membrane. This is an uncharacterized protein from Chlamydia trachomatis serovar D (strain ATCC VR-885 / DSM 19411 / UW-3/Cx).